The primary structure comprises 138 residues: Large ribosomal subunit protein uL16 (138 aa).

A compositionally biased stretch (basic residues) spans 1–13 (MLQPKRRKYRKEQ). Residues 1-24 (MLQPKRRKYRKEQKGRNTGKATRG) are disordered.

The protein belongs to the universal ribosomal protein uL16 family. In terms of assembly, part of the 50S ribosomal subunit.

Binds 23S rRNA and is also seen to make contacts with the A and possibly P site tRNAs. The sequence is that of Large ribosomal subunit protein uL16 from Burkholderia ambifaria (strain ATCC BAA-244 / DSM 16087 / CCUG 44356 / LMG 19182 / AMMD) (Burkholderia cepacia (strain AMMD)).